The primary structure comprises 283 residues: Polyamine aminopropyltransferase (283 aa).

The region spanning 2–237 is the PABS domain; sequence ELWYTEEHTD…GHWLFGFASK (236 aa). Residue glutamine 31 coordinates S-methyl-5'-thioadenosine. Residues histidine 62 and aspartate 86 each contribute to the spermidine site. Residues glutamate 106 and 137 to 138 each bind S-methyl-5'-thioadenosine; that span reads DG. Aspartate 155 functions as the Proton acceptor in the catalytic mechanism. 155–158 is a spermidine binding site; sequence DSTD. Proline 162 is a binding site for S-methyl-5'-thioadenosine.

Belongs to the spermidine/spermine synthase family. In terms of assembly, homodimer or homotetramer.

The protein localises to the cytoplasm. The catalysed reaction is S-adenosyl 3-(methylsulfanyl)propylamine + putrescine = S-methyl-5'-thioadenosine + spermidine + H(+). Its pathway is amine and polyamine biosynthesis; spermidine biosynthesis; spermidine from putrescine: step 1/1. Its function is as follows. Catalyzes the irreversible transfer of a propylamine group from the amino donor S-adenosylmethioninamine (decarboxy-AdoMet) to putrescine (1,4-diaminobutane) to yield spermidine. This is Polyamine aminopropyltransferase from Clostridium perfringens (strain 13 / Type A).